The sequence spans 495 residues: Dihydrolipoyl dehydrogenase, mitochondrial (495 aa).

Residues 59 to 68, Lys-77, and 169 to 171 contribute to the FAD site; these read EKNATLGGTC and SGS. Residues Cys-68 and Cys-73 are joined by a disulfide bond. NAD(+)-binding positions include 206–213, Glu-229, Val-264, and Gly-299; that span reads GAGVIGLE. FAD-binding positions include Asp-340 and 346–349; that span reads MLAH. His-472 serves as the catalytic Proton acceptor.

This sequence belongs to the class-I pyridine nucleotide-disulfide oxidoreductase family. FAD serves as cofactor.

The protein localises to the mitochondrion matrix. The catalysed reaction is N(6)-[(R)-dihydrolipoyl]-L-lysyl-[protein] + NAD(+) = N(6)-[(R)-lipoyl]-L-lysyl-[protein] + NADH + H(+). The sequence is that of Dihydrolipoyl dehydrogenase, mitochondrial (dld-1) from Caenorhabditis elegans.